The following is a 286-amino-acid chain: NADH-cytochrome b5 reductase 1 (286 aa).

A helical membrane pass occupies residues 6 to 26; the sequence is FILVIIGSVALAAGVKYVFTL. In terms of domain architecture, FAD-binding FR-type spans 52 to 155; the sequence is QEYRKFQLKE…KGPKGKFNYQ (104 aa). FAD-binding positions include 135-150 and 161-193; these read DNMFIGDSIEVKGPKG and SIGMLAGGTGITPMLQVIKAILKNPSDKTEISL.

Belongs to the flavoprotein pyridine nucleotide cytochrome reductase family. Monomer. It depends on FAD as a cofactor.

It is found in the endoplasmic reticulum membrane. The protein localises to the mitochondrion outer membrane. The enzyme catalyses 2 Fe(III)-[cytochrome b5] + NADH = 2 Fe(II)-[cytochrome b5] + NAD(+) + H(+). In terms of biological role, electron donor reductase for cytochrome b5. The cytochrome b5/NADH cytochrome b5 reductase electron transfer system supports the catalytic activity of several sterol biosynthetic enzymes. This is NADH-cytochrome b5 reductase 1 (cyb5r1) from Dictyostelium discoideum (Social amoeba).